The sequence spans 28 residues: Apolipoprotein C-I (28 aa).

It belongs to the apolipoprotein C1 family.

The protein resides in the secreted. In terms of biological role, inhibitor of lipoprotein binding to the low density lipoprotein (LDL) receptor, LDL receptor-related protein, and very low density lipoprotein (VLDL) receptor. Associates with high density lipoproteins (HDL) and the triacylglycerol-rich lipoproteins in the plasma and makes up about 10% of the protein of the VLDL and 2% of that of HDL. Appears to interfere directly with fatty acid uptake and is also the major plasma inhibitor of cholesteryl ester transfer protein (CETP). Binds free fatty acids and reduces their intracellular esterification. Modulates the interaction of APOE with beta-migrating VLDL and inhibits binding of beta-VLDL to the LDL receptor-related protein. In Oryctolagus cuniculus (Rabbit), this protein is Apolipoprotein C-I (APOC1).